We begin with the raw amino-acid sequence, 461 residues long: Aspartyl/glutamyl-tRNA(Asn/Gln) amidotransferase subunit B (461 aa).

The protein belongs to the GatB/GatE family. GatB subfamily. As to quaternary structure, heterotrimer of A, B and C subunits.

It catalyses the reaction L-glutamyl-tRNA(Gln) + L-glutamine + ATP + H2O = L-glutaminyl-tRNA(Gln) + L-glutamate + ADP + phosphate + H(+). The enzyme catalyses L-aspartyl-tRNA(Asn) + L-glutamine + ATP + H2O = L-asparaginyl-tRNA(Asn) + L-glutamate + ADP + phosphate + 2 H(+). In terms of biological role, allows the formation of correctly charged Asn-tRNA(Asn) or Gln-tRNA(Gln) through the transamidation of misacylated Asp-tRNA(Asn) or Glu-tRNA(Gln) in organisms which lack either or both of asparaginyl-tRNA or glutaminyl-tRNA synthetases. The reaction takes place in the presence of glutamine and ATP through an activated phospho-Asp-tRNA(Asn) or phospho-Glu-tRNA(Gln). This chain is Aspartyl/glutamyl-tRNA(Asn/Gln) amidotransferase subunit B, found in Methanopyrus kandleri (strain AV19 / DSM 6324 / JCM 9639 / NBRC 100938).